A 185-amino-acid chain; its full sequence is UPF0301 protein IL2218 (185 aa).

The protein belongs to the UPF0301 (AlgH) family.

The polypeptide is UPF0301 protein IL2218 (Idiomarina loihiensis (strain ATCC BAA-735 / DSM 15497 / L2-TR)).